Consider the following 282-residue polypeptide: Bifunctional protein FolD (282 aa).

NADP(+) is bound by residues 165-167 (GAS) and Ile231.

The protein belongs to the tetrahydrofolate dehydrogenase/cyclohydrolase family. Homodimer.

The catalysed reaction is (6R)-5,10-methylene-5,6,7,8-tetrahydrofolate + NADP(+) = (6R)-5,10-methenyltetrahydrofolate + NADPH. The enzyme catalyses (6R)-5,10-methenyltetrahydrofolate + H2O = (6R)-10-formyltetrahydrofolate + H(+). The protein operates within one-carbon metabolism; tetrahydrofolate interconversion. In terms of biological role, catalyzes the oxidation of 5,10-methylenetetrahydrofolate to 5,10-methenyltetrahydrofolate and then the hydrolysis of 5,10-methenyltetrahydrofolate to 10-formyltetrahydrofolate. This is Bifunctional protein FolD from Francisella philomiragia subsp. philomiragia (strain ATCC 25017 / CCUG 19701 / FSC 153 / O#319-036).